The chain runs to 513 residues: ATP synthase subunit alpha (513 aa).

Position 169 to 176 (Gly169 to Thr176) interacts with ATP.

The protein belongs to the ATPase alpha/beta chains family. As to quaternary structure, F-type ATPases have 2 components, CF(1) - the catalytic core - and CF(0) - the membrane proton channel. CF(1) has five subunits: alpha(3), beta(3), gamma(1), delta(1), epsilon(1). CF(0) has three main subunits: a(1), b(2) and c(9-12). The alpha and beta chains form an alternating ring which encloses part of the gamma chain. CF(1) is attached to CF(0) by a central stalk formed by the gamma and epsilon chains, while a peripheral stalk is formed by the delta and b chains.

The protein resides in the cell inner membrane. It carries out the reaction ATP + H2O + 4 H(+)(in) = ADP + phosphate + 5 H(+)(out). Functionally, produces ATP from ADP in the presence of a proton gradient across the membrane. The alpha chain is a regulatory subunit. The sequence is that of ATP synthase subunit alpha from Glaesserella parasuis serovar 5 (strain SH0165) (Haemophilus parasuis).